The sequence spans 251 residues: MEKIKSAGPSSVPRHVAIIMDGNNRWARKRLLPGVAGHKAGVDAVRAVIEVCAEAKVEVLTLFAFSSENWQRPAEEVGALMELFFTALRRETKRLNENDISLRIIGDRSRFHPELQAAMREAEVRTSGNSRFVLQIAANYGGQWDIAQAAQRLAREVQAGHLQPEDITPQLLQTCLATGDLPLPDLCIRTGGEHRISNFLLWQLAYAELYFSDLFWPDFKHDAMRAALADFASRQRRFGKTSEQVEAGARA.

Aspartate 21 is a catalytic residue. Aspartate 21 is a binding site for Mg(2+). Substrate contacts are provided by residues 22–25 (GNNR), tryptophan 26, histidine 38, and 66–68 (SSE). The Proton acceptor role is filled by asparagine 69. Substrate is bound by residues tryptophan 70, arginine 72, arginine 189, and 195-197 (RIS). Residue glutamate 208 coordinates Mg(2+).

The protein belongs to the UPP synthase family. As to quaternary structure, homodimer. Mg(2+) is required as a cofactor.

The catalysed reaction is 8 isopentenyl diphosphate + (2E,6E)-farnesyl diphosphate = di-trans,octa-cis-undecaprenyl diphosphate + 8 diphosphate. Catalyzes the sequential condensation of isopentenyl diphosphate (IPP) with (2E,6E)-farnesyl diphosphate (E,E-FPP) to yield (2Z,6Z,10Z,14Z,18Z,22Z,26Z,30Z,34E,38E)-undecaprenyl diphosphate (di-trans,octa-cis-UPP). UPP is the precursor of glycosyl carrier lipid in the biosynthesis of bacterial cell wall polysaccharide components such as peptidoglycan and lipopolysaccharide. The polypeptide is Ditrans,polycis-undecaprenyl-diphosphate synthase ((2E,6E)-farnesyl-diphosphate specific) (Pseudomonas syringae pv. tomato (strain ATCC BAA-871 / DC3000)).